Consider the following 20-residue polypeptide: Non-specific lipid-transfer protein (20 aa).

The protein belongs to the plant LTP family.

Plant non-specific lipid-transfer proteins transfer phospholipids as well as galactolipids across membranes. May play a role in wax or cutin deposition in the cell walls of expanding epidermal cells and certain secretory tissues. The sequence is that of Non-specific lipid-transfer protein from Citrus sinensis (Sweet orange).